A 158-amino-acid polypeptide reads, in one-letter code: Transcription elongation factor GreA (158 aa).

Residues Asn-48 to Ala-75 are a coiled coil.

It belongs to the GreA/GreB family.

Its function is as follows. Necessary for efficient RNA polymerase transcription elongation past template-encoded arresting sites. The arresting sites in DNA have the property of trapping a certain fraction of elongating RNA polymerases that pass through, resulting in locked ternary complexes. Cleavage of the nascent transcript by cleavage factors such as GreA or GreB allows the resumption of elongation from the new 3'terminus. GreA releases sequences of 2 to 3 nucleotides. This Shouchella clausii (strain KSM-K16) (Alkalihalobacillus clausii) protein is Transcription elongation factor GreA.